Here is an 85-residue protein sequence, read N- to C-terminus: Putative membrane protein insertion efficiency factor (85 aa).

Positions P62–G85 are disordered.

It belongs to the UPF0161 family.

It is found in the cell inner membrane. Functionally, could be involved in insertion of integral membrane proteins into the membrane. In Ruegeria pomeroyi (strain ATCC 700808 / DSM 15171 / DSS-3) (Silicibacter pomeroyi), this protein is Putative membrane protein insertion efficiency factor.